Reading from the N-terminus, the 164-residue chain is Large ribosomal subunit protein uL10 (164 aa).

Belongs to the universal ribosomal protein uL10 family. In terms of assembly, part of the ribosomal stalk of the 50S ribosomal subunit. The N-terminus interacts with L11 and the large rRNA to form the base of the stalk. The C-terminus forms an elongated spine to which L12 dimers bind in a sequential fashion forming a multimeric L10(L12)X complex.

Its function is as follows. Forms part of the ribosomal stalk, playing a central role in the interaction of the ribosome with GTP-bound translation factors. This Pseudoalteromonas translucida (strain TAC 125) protein is Large ribosomal subunit protein uL10.